The sequence spans 678 residues: Glycine--tRNA ligase beta subunit (678 aa).

Belongs to the class-II aminoacyl-tRNA synthetase family. In terms of assembly, tetramer of two alpha and two beta subunits.

It is found in the cytoplasm. The catalysed reaction is tRNA(Gly) + glycine + ATP = glycyl-tRNA(Gly) + AMP + diphosphate. The protein is Glycine--tRNA ligase beta subunit of Streptococcus pneumoniae (strain P1031).